A 181-amino-acid chain; its full sequence is Peptide deformylase 1 (181 aa).

Residues Cys106 and His148 each coordinate Fe cation. Glu149 is a catalytic residue. His152 is a Fe cation binding site.

This sequence belongs to the polypeptide deformylase family. Requires Fe(2+) as cofactor.

It catalyses the reaction N-terminal N-formyl-L-methionyl-[peptide] + H2O = N-terminal L-methionyl-[peptide] + formate. In terms of biological role, removes the formyl group from the N-terminal Met of newly synthesized proteins. Requires at least a dipeptide for an efficient rate of reaction. N-terminal L-methionine is a prerequisite for activity but the enzyme has broad specificity at other positions. This chain is Peptide deformylase 1, found in Burkholderia multivorans (strain ATCC 17616 / 249).